The primary structure comprises 103 residues: Cell division protein FtsB (103 aa).

Over 1 to 3 (MGK) the chain is Cytoplasmic. A helical transmembrane segment spans residues 4-21 (LTLLLLALLVWLQYSLWF). Residues 22 to 103 (GKNGIHDYSR…RAGGPAQNNR (82 aa)) are Periplasmic-facing. The stretch at 38–62 (VQQATNAKLKARNDQLFAEIDDLNG) forms a coiled coil.

The protein belongs to the FtsB family. In terms of assembly, part of a complex composed of FtsB, FtsL and FtsQ.

Its subcellular location is the cell inner membrane. Its function is as follows. Essential cell division protein. May link together the upstream cell division proteins, which are predominantly cytoplasmic, with the downstream cell division proteins, which are predominantly periplasmic. The chain is Cell division protein FtsB from Cronobacter sakazakii (strain ATCC BAA-894) (Enterobacter sakazakii).